A 96-amino-acid polypeptide reads, in one-letter code: Citrate lyase acyl carrier protein (96 aa).

The residue at position 14 (serine 14) is an O-(phosphoribosyl dephospho-coenzyme A)serine.

Belongs to the CitD family. Oligomer with a subunit composition of (alpha,beta,gamma)6.

It is found in the cytoplasm. Functionally, covalent carrier of the coenzyme of citrate lyase. The polypeptide is Citrate lyase acyl carrier protein (Lactococcus lactis subsp. lactis (strain IL1403) (Streptococcus lactis)).